A 453-amino-acid polypeptide reads, in one-letter code: Omega-3 fatty acid desaturase, chloroplastic (453 aa).

Residues 171–175 carry the Histidine box-1 motif; sequence HDCGH. Positions 207-211 match the Histidine box-2 motif; the sequence is HRTHH. A Histidine box-3 motif is present at residues 374–378; that stretch reads HVIHH.

Belongs to the fatty acid desaturase type 1 family.

Its subcellular location is the plastid. The protein resides in the chloroplast membrane. It functions in the pathway lipid metabolism; polyunsaturated fatty acid biosynthesis. Its function is as follows. Chloroplast omega-3 fatty acid desaturase introduces the third double bond in the biosynthesis of 16:3 and 18:3 fatty acids, important constituents of plant membranes. It is thought to use ferredoxin as an electron donor and to act on fatty acids esterified to galactolipids, sulfolipids and phosphatidylglycerol. The sequence is that of Omega-3 fatty acid desaturase, chloroplastic (FAD7) from Glycine max (Soybean).